The primary structure comprises 287 residues: Pyridoxal 5'-phosphate synthase subunit PdxS (287 aa).

D21 is a D-ribose 5-phosphate binding site. K78 serves as the catalytic Schiff-base intermediate with D-ribose 5-phosphate. G150 contacts D-ribose 5-phosphate. R162 is a D-glyceraldehyde 3-phosphate binding site. D-ribose 5-phosphate is bound by residues G211 and 232–233; that span reads GS.

This sequence belongs to the PdxS/SNZ family. In terms of assembly, in the presence of PdxT, forms a dodecamer of heterodimers.

It catalyses the reaction aldehydo-D-ribose 5-phosphate + D-glyceraldehyde 3-phosphate + L-glutamine = pyridoxal 5'-phosphate + L-glutamate + phosphate + 3 H2O + H(+). The protein operates within cofactor biosynthesis; pyridoxal 5'-phosphate biosynthesis. Its function is as follows. Catalyzes the formation of pyridoxal 5'-phosphate from ribose 5-phosphate (RBP), glyceraldehyde 3-phosphate (G3P) and ammonia. The ammonia is provided by the PdxT subunit. Can also use ribulose 5-phosphate and dihydroxyacetone phosphate as substrates, resulting from enzyme-catalyzed isomerization of RBP and G3P, respectively. The chain is Pyridoxal 5'-phosphate synthase subunit PdxS from Francisella philomiragia subsp. philomiragia (strain ATCC 25017 / CCUG 19701 / FSC 153 / O#319-036).